A 288-amino-acid polypeptide reads, in one-letter code: Ribosomal RNA small subunit methyltransferase A (288 aa).

Residues asparagine 18, leucine 20, glycine 45, glutamate 66, aspartate 91, and asparagine 118 each contribute to the S-adenosyl-L-methionine site.

Belongs to the class I-like SAM-binding methyltransferase superfamily. rRNA adenine N(6)-methyltransferase family. RsmA subfamily.

The protein resides in the cytoplasm. The enzyme catalyses adenosine(1518)/adenosine(1519) in 16S rRNA + 4 S-adenosyl-L-methionine = N(6)-dimethyladenosine(1518)/N(6)-dimethyladenosine(1519) in 16S rRNA + 4 S-adenosyl-L-homocysteine + 4 H(+). In terms of biological role, specifically dimethylates two adjacent adenosines (A1518 and A1519) in the loop of a conserved hairpin near the 3'-end of 16S rRNA in the 30S particle. May play a critical role in biogenesis of 30S subunits. The chain is Ribosomal RNA small subunit methyltransferase A from Pasteurella multocida (strain Pm70).